We begin with the raw amino-acid sequence, 175 residues long: Myosin regulatory light chain 2, atrial isoform (175 aa).

Position 2 is an N-acetylalanine (alanine 2). Serine 22 and serine 23 each carry phosphoserine. EF-hand domains lie at 32-67 (AQIQEFKEAFSCIDQNRDGIICKSDLRETYSQLGKV), 102-137 (DPEEAILSAFRLFDPSGKGVVNKDQFKQLLLTQADK), and 138-173 (FSPAEVEQMFALTPMDLAGNIDYKSLCYIITHGDEK). The Ca(2+) site is built by aspartate 45, asparagine 47, aspartate 49, and aspartate 56.

In terms of assembly, myosin is a hexamer of 2 heavy chains and 4 light chains.

This Sus scrofa (Pig) protein is Myosin regulatory light chain 2, atrial isoform (MYL7).